The chain runs to 488 residues: Ribulose bisphosphate carboxylase large chain (488 aa).

2 residues coordinate substrate: Asn127 and Thr177. The active-site Proton acceptor is the Lys179. Lys181 contributes to the substrate binding site. Positions 205, 207, and 208 each coordinate Mg(2+). Lys205 is subject to N6-carboxylysine. His297 functions as the Proton acceptor in the catalytic mechanism. Substrate-binding residues include Arg298, His330, and Ser382.

Belongs to the RuBisCO large chain family. Type I subfamily. Heterohexadecamer of 8 large chains and 8 small chains. Mg(2+) serves as cofactor.

Its subcellular location is the plastid. It is found in the chloroplast. It catalyses the reaction 2 (2R)-3-phosphoglycerate + 2 H(+) = D-ribulose 1,5-bisphosphate + CO2 + H2O. The catalysed reaction is D-ribulose 1,5-bisphosphate + O2 = 2-phosphoglycolate + (2R)-3-phosphoglycerate + 2 H(+). Functionally, ruBisCO catalyzes two reactions: the carboxylation of D-ribulose 1,5-bisphosphate, the primary event in carbon dioxide fixation, as well as the oxidative fragmentation of the pentose substrate in the photorespiration process. Both reactions occur simultaneously and in competition at the same active site. This is Ribulose bisphosphate carboxylase large chain from Pyropia suborbiculata (Red alga).